The sequence spans 188 residues: FUN14 domain-containing protein 1B (188 aa).

Residues 21–41 (VVNIDGNIFSIYVCFFVCFFF) form a helical membrane-spanning segment. A YXXL motif is present at residues 52–55 (YEVL). 3 consecutive transmembrane segments (helical) span residues 82–102 (YSVA…GFLF), 109–129 (AATA…GGYI), and 167–187 (FFKK…IGLA).

This sequence belongs to the FUN14 family.

Its subcellular location is the mitochondrion outer membrane. Functionally, acts as an activator of hypoxia-induced mitophagy, an important mechanism for mitochondrial quality control. This chain is FUN14 domain-containing protein 1B (fundc1-b), found in Xenopus laevis (African clawed frog).